A 379-amino-acid polypeptide reads, in one-letter code: Orotidine 5'-phosphate decarboxylase (379 aa).

Substrate contacts are provided by residues D42, 64 to 66, and 99 to 108; these read KTH and DRKFGDIGHT. The active-site Proton donor is K101. A disordered region spans residues 165–198; that stretch reads PTMDQFDDAEDAKDDEPATVNDNGSNMMEKPIYA. Positions 169-178 are enriched in acidic residues; sequence QFDDAEDAKD. Substrate is bound by residues Y331 and R350.

Belongs to the OMP decarboxylase family.

The enzyme catalyses orotidine 5'-phosphate + H(+) = UMP + CO2. It functions in the pathway pyrimidine metabolism; UMP biosynthesis via de novo pathway; UMP from orotate: step 2/2. This is Orotidine 5'-phosphate decarboxylase (pyr4) from Hypocrea atroviridis (Trichoderma atroviride).